A 956-amino-acid polypeptide reads, in one-letter code: Glutamate receptor ionotropic, kainate 4 (956 aa).

Positions 1-20 are cleaved as a signal peptide; it reads MPRVSAPLVLLPAWLLMVAC. The Extracellular portion of the chain corresponds to 21–545; that stretch reads SPHSLRIAAI…YFSFLDPFSP (525 aa). 8 N-linked (GlcNAc...) asparagine glycosylation sites follow: Asn158, Asn220, Asn272, Asn286, Asn323, Asn408, Asn415, and Asn479. Residues Gly500, Thr502, and Arg507 each contribute to the L-glutamate site. A helical transmembrane segment spans residues 546-566; the sequence is GVWLFMLLAYLAVSCVLFLVA. At 567 to 623 the chain is on the cytoplasmic side; that stretch reads RLTPYEWYSPHPCAQGRCNLLVNQYSLGNSLWFPVGGFMQQGSTIAPRALSTRCVSG. A helical transmembrane segment spans residues 624-644; the sequence is VWWAFTLIIISSYTANLAAFL. The Extracellular segment spans residues 645–804; sequence TVQRMEVPIE…HRAKGLGMEN (160 aa). L-glutamate is bound by residues Ser674, Ser675, and Glu723. The N-linked (GlcNAc...) asparagine glycan is linked to Asn736. Residues 805–825 traverse the membrane as a helical segment; sequence IGGIFVVLICGLIVAIFMAML. At 826-956 the chain is on the cytoplasmic side; that stretch reads EFLWTLRHSE…DKTTNSSEPE (131 aa). The segment at 931–956 is disordered; sequence LRARPSPARSEESLEWDKTTNSSEPE. Residues 939 to 948 show a composition bias toward basic and acidic residues; sequence RSEESLEWDK.

It belongs to the glutamate-gated ion channel (TC 1.A.10.1) family. GRIK4 subfamily. As to quaternary structure, homodimer. Can form functional heteromeric receptors with GRIK1, GRIK2 and GRIK3 subunits. Forms a heteromeric complex with GRIK2. Expressed in the hippocampus and cerebellum (at protein level).

The protein resides in the cell membrane. It localises to the postsynaptic cell membrane. The protein localises to the presynaptic cell membrane. Its function is as follows. Ionotropic glutamate receptor that functions as a cation-permeable ligand-gated ion channel. Cannot form functional channels on its own and produces channel activity only in heteromeric assembly with GRIK1, GRIK2 and GRIK3 subunits. The polypeptide is Glutamate receptor ionotropic, kainate 4 (Grik4) (Mus musculus (Mouse)).